Reading from the N-terminus, the 80-residue chain is Conotoxin VnMSGL-0123 (80 aa).

The signal sequence occupies residues 1 to 20 (MSGLGIMVLTLLLLVSMATS). The propeptide occupies 21–44 (HQDGGGKQATQRDAINVRRRRSIT). Intrachain disulfides connect Cys-53–Cys-65, Cys-57–Cys-74, and Cys-64–Cys-78. A Phenylalanine amide modification is found at Phe-79.

This sequence belongs to the conotoxin O3 superfamily. As to expression, expressed by the venom duct.

It localises to the secreted. In Conus ventricosus (Mediterranean cone), this protein is Conotoxin VnMSGL-0123.